Reading from the N-terminus, the 250-residue chain is ATP synthase subunit a (250 aa).

Helical transmembrane passes span 27 to 47 (TDTV…AFYL), 83 to 103 (IAPF…ISNW), 129 to 149 (INYV…AGIW), 191 to 211 (IFAG…IMWA), and 219 to 239 (FDLF…ILYF).

The protein belongs to the ATPase A chain family. As to quaternary structure, F-type ATPases have 2 components, CF(1) - the catalytic core - and CF(0) - the membrane proton channel. CF(1) has five subunits: alpha(3), beta(3), gamma(1), delta(1), epsilon(1). CF(0) has three main subunits: a(1), b(2) and c(9-12). The alpha and beta chains form an alternating ring which encloses part of the gamma chain. CF(1) is attached to CF(0) by a central stalk formed by the gamma and epsilon chains, while a peripheral stalk is formed by the delta and b chains.

The protein resides in the cell membrane. Key component of the proton channel; it plays a direct role in the translocation of protons across the membrane. In Mycobacterium ulcerans (strain Agy99), this protein is ATP synthase subunit a.